Consider the following 476-residue polypeptide: Glutamate--tRNA ligase (476 aa).

Positions 9–19 match the 'HIGH' region motif; it reads PSPTGTLHIGT. Positions 248 to 252 match the 'KMSKS' region motif; the sequence is KLSKR. Lys251 is an ATP binding site.

The protein belongs to the class-I aminoacyl-tRNA synthetase family. Glutamate--tRNA ligase type 1 subfamily. Monomer.

It localises to the cytoplasm. The enzyme catalyses tRNA(Glu) + L-glutamate + ATP = L-glutamyl-tRNA(Glu) + AMP + diphosphate. In terms of biological role, catalyzes the attachment of glutamate to tRNA(Glu) in a two-step reaction: glutamate is first activated by ATP to form Glu-AMP and then transferred to the acceptor end of tRNA(Glu). The chain is Glutamate--tRNA ligase from Synechococcus sp. (strain CC9311).